A 408-amino-acid polypeptide reads, in one-letter code: CinA-like protein (408 aa).

Belongs to the CinA family.

This Thermotoga neapolitana (strain ATCC 49049 / DSM 4359 / NBRC 107923 / NS-E) protein is CinA-like protein.